A 245-amino-acid polypeptide reads, in one-letter code: Eukaryotic translation initiation factor 6 (245 aa).

This sequence belongs to the eIF-6 family. In terms of assembly, monomer. Associates with the 60S ribosomal subunit.

It is found in the cytoplasm. Its subcellular location is the nucleus. The protein localises to the nucleolus. Functionally, binds to the 60S ribosomal subunit and prevents its association with the 40S ribosomal subunit to form the 80S initiation complex in the cytoplasm. May also be involved in ribosome biogenesis. The chain is Eukaryotic translation initiation factor 6 from Drosophila melanogaster (Fruit fly).